The sequence spans 240 residues: Phosphatidylserine decarboxylase proenzyme (240 aa).

The active-site Schiff-base intermediate with substrate; via pyruvic acid is serine 209. The residue at position 209 (serine 209) is a Pyruvic acid (Ser); by autocatalysis.

Belongs to the phosphatidylserine decarboxylase family. PSD-A subfamily. As to quaternary structure, heterodimer of a large membrane-associated beta subunit and a small pyruvoyl-containing alpha subunit. The cofactor is pyruvate. In terms of processing, is synthesized initially as an inactive proenzyme. Formation of the active enzyme involves a self-maturation process in which the active site pyruvoyl group is generated from an internal serine residue via an autocatalytic post-translational modification. Two non-identical subunits are generated from the proenzyme in this reaction, and the pyruvate is formed at the N-terminus of the alpha chain, which is derived from the carboxyl end of the proenzyme. The post-translation cleavage follows an unusual pathway, termed non-hydrolytic serinolysis, in which the side chain hydroxyl group of the serine supplies its oxygen atom to form the C-terminus of the beta chain, while the remainder of the serine residue undergoes an oxidative deamination to produce ammonia and the pyruvoyl prosthetic group on the alpha chain.

It localises to the cell membrane. The enzyme catalyses a 1,2-diacyl-sn-glycero-3-phospho-L-serine + H(+) = a 1,2-diacyl-sn-glycero-3-phosphoethanolamine + CO2. Its pathway is phospholipid metabolism; phosphatidylethanolamine biosynthesis; phosphatidylethanolamine from CDP-diacylglycerol: step 2/2. Its function is as follows. Catalyzes the formation of phosphatidylethanolamine (PtdEtn) from phosphatidylserine (PtdSer). This chain is Phosphatidylserine decarboxylase proenzyme, found in Mycobacterium avium (strain 104).